Here is a 152-residue protein sequence, read N- to C-terminus: MWFPQIIAGMAAGGAASAMTPGKVLFTNALGLGCSRSRGLFLEMFGTAVLCLTVLMTAVEKRETNFMAALPIGISLFMAHMALTGYTGTGVNPARSLGAAVAARYFPHYHWIYWISPLLGAFLAWSVWQLLQILDYTTYVNAEKAAGQKKED.

At 1–5 (MWFPQ) the chain is on the cytoplasmic side. The chain crosses the membrane as a helical span at residues 6–26 (IIAGMAAGGAASAMTPGKVLF). The Extracellular segment spans residues 27–38 (TNALGLGCSRSR). The chain crosses the membrane as a helical span at residues 39–59 (GLFLEMFGTAVLCLTVLMTAV). At 60-65 (EKRETN) the chain is on the cytoplasmic side. The helical transmembrane segment at 66 to 86 (FMAALPIGISLFMAHMALTGY) threads the bilayer. Topologically, residues 87–110 (TGTGVNPARSLGAAVAARYFPHYH) are extracellular. An NPA motif is present at residues 92–94 (NPA). The chain crosses the membrane as a helical span at residues 111-131 (WIYWISPLLGAFLAWSVWQLL). Residues 132–152 (QILDYTTYVNAEKAAGQKKED) lie on the Cytoplasmic side of the membrane.

Belongs to the MIP/aquaporin (TC 1.A.8) family.

Its subcellular location is the membrane. This is an uncharacterized protein from Saccharomyces cerevisiae (strain RM11-1a) (Baker's yeast).